Reading from the N-terminus, the 212-residue chain is Ribonuclease HII (212 aa).

The RNase H type-2 domain occupies 17 to 211; sequence ANLAGIDEAG…VIEALLSLEQ (195 aa). The a divalent metal cation site is built by aspartate 23, glutamate 24, and aspartate 120.

The protein belongs to the RNase HII family. Mn(2+) serves as cofactor. The cofactor is Mg(2+).

The protein resides in the cytoplasm. The catalysed reaction is Endonucleolytic cleavage to 5'-phosphomonoester.. In terms of biological role, endonuclease that specifically degrades the RNA of RNA-DNA hybrids. This chain is Ribonuclease HII, found in Chloroflexus aurantiacus (strain ATCC 29364 / DSM 637 / Y-400-fl).